The primary structure comprises 219 residues: U-scoloptoxin(11)-Sm7a (219 aa).

An N-terminal signal peptide occupies residues 1 to 15 (MYLFLMINYFVLANS).

The protein belongs to the scoloptoxin-11 family. Contains 8 disulfide bonds. Expressed by the venom gland.

Its subcellular location is the secreted. In Scolopendra morsitans (Tanzanian blue ringleg centipede), this protein is U-scoloptoxin(11)-Sm7a.